Consider the following 62-residue polypeptide: Sperm protamine P1 (62 aa).

The tract at residues 1-62 (MARSRRHSRS…RCSRRRRRRC (62 aa)) is disordered.

This sequence belongs to the protamine P1 family. Testis.

Its subcellular location is the nucleus. The protein localises to the chromosome. Functionally, protamines substitute for histones in the chromatin of sperm during the haploid phase of spermatogenesis. They compact sperm DNA into a highly condensed, stable and inactive complex. The protein is Sperm protamine P1 (PRM1) of Planigale ingrami (Long-tailed planigale).